We begin with the raw amino-acid sequence, 988 residues long: Ubiquitin carboxyl-terminal hydrolase 36 (988 aa).

Residues 16-55 (PTLRTDNNGARKQAEHPNNQSHHNHPHPTSNPNELPKPKR) are disordered. Residues 31–48 (HPNNQSHHNHPHPTSNPN) are compositionally biased toward low complexity. The region spanning 78–386 (TGMINVGNTC…NAYIMFFELD (309 aa)) is the USP domain. Cys87 functions as the Nucleophile in the catalytic mechanism. The active-site Proton acceptor is the His345. Disordered stretches follow at residues 393–422 (PPAN…SPSP), 483–782 (ATSA…VTSN), and 868–988 (EQRQ…QQQT). Low complexity-rich tracts occupy residues 408–422 (STTP…SPSP) and 490–509 (NGNK…KSIN). Residues Ser419 and Ser421 each carry the phosphoserine modification. The span at 532 to 544 (TTAQLPSMPNMTE) shows a compositional bias: polar residues. Thr561 and Thr565 each carry phosphothreonine. Residues Ser575 and Ser577 each carry the phosphoserine modification. The span at 592–601 (EGEDFSESDQ) shows a compositional bias: acidic residues. The span at 602-631 (ESGQTNGHSKTNGSLTNGSASSSVHVNNSK) shows a compositional bias: polar residues. Positions 632–649 (QKTDAIDEIFKSLKKSAD) are enriched in basic and acidic residues. At Ser650 the chain carries Phosphoserine. The segment covering 650–659 (SEEDDDEEEP) has biased composition (acidic residues). Positions 669–679 (PQKQSQSQSKA) are enriched in low complexity. The span at 680–689 (PPSPKTPPSP) shows a compositional bias: pro residues. Ser682 bears the Phosphoserine mark. A Phosphothreonine modification is found at Thr685. At Ser688 the chain carries Phosphoserine. Positions 707–717 (VDAIDDDDDAV) are enriched in acidic residues. Residue Thr728 is modified to Phosphothreonine. The span at 735-747 (NPFSSSKPSTDSP) shows a compositional bias: polar residues. A Phosphoserine modification is found at Ser746. Residue Thr749 is modified to Phosphothreonine. Polar residues predominate over residues 762-782 (ALKSHQQPRVGNGYQSNVTSN). Composition is skewed to low complexity over residues 892–903 (SGSAKGNNASNS) and 930–943 (RFHN…FQQR).

Belongs to the peptidase C19 family. In terms of assembly, interacts with atms/PAF1, but not with CycT.

Its subcellular location is the nucleus. It localises to the nucleolus. It carries out the reaction Thiol-dependent hydrolysis of ester, thioester, amide, peptide and isopeptide bonds formed by the C-terminal Gly of ubiquitin (a 76-residue protein attached to proteins as an intracellular targeting signal).. Required for maintaining multiple types of adult stem cells, including male and female germline, epithelial follicle cell and intestinal stem cells. May function as a transcriptional repressor by continually deubiquiting histone H2B at the promoters of genes critical for cellular differentiation, thereby preventing histone H3 'Lys-4' trimethylation (H3K4). Controls selective autophagy activation by ubiquitinated proteins. This chain is Ubiquitin carboxyl-terminal hydrolase 36 (Usp36), found in Drosophila simulans (Fruit fly).